The chain runs to 451 residues: Methylenetetrahydrofolate--tRNA-(uracil-5-)-methyltransferase TrmFO (451 aa).

Residue 18–23 (GGGLAG) coordinates FAD.

Belongs to the MnmG family. TrmFO subfamily. Requires FAD as cofactor.

The protein resides in the cytoplasm. The enzyme catalyses uridine(54) in tRNA + (6R)-5,10-methylene-5,6,7,8-tetrahydrofolate + NADH + H(+) = 5-methyluridine(54) in tRNA + (6S)-5,6,7,8-tetrahydrofolate + NAD(+). The catalysed reaction is uridine(54) in tRNA + (6R)-5,10-methylene-5,6,7,8-tetrahydrofolate + NADPH + H(+) = 5-methyluridine(54) in tRNA + (6S)-5,6,7,8-tetrahydrofolate + NADP(+). Its function is as follows. Catalyzes the folate-dependent formation of 5-methyl-uridine at position 54 (M-5-U54) in all tRNAs. The protein is Methylenetetrahydrofolate--tRNA-(uracil-5-)-methyltransferase TrmFO of Synechococcus sp. (strain JA-3-3Ab) (Cyanobacteria bacterium Yellowstone A-Prime).